Here is a 204-residue protein sequence, read N- to C-terminus: Small ribosomal subunit protein uS4 (204 aa).

The 64-residue stretch at 93–156 (SRLSSVLYHS…AKIPVIVEAV (64 aa)) folds into the S4 RNA-binding domain.

This sequence belongs to the universal ribosomal protein uS4 family. Part of the 30S ribosomal subunit. Contacts protein S5. The interaction surface between S4 and S5 is involved in control of translational fidelity.

In terms of biological role, one of the primary rRNA binding proteins, it binds directly to 16S rRNA where it nucleates assembly of the body of the 30S subunit. Its function is as follows. With S5 and S12 plays an important role in translational accuracy. The sequence is that of Small ribosomal subunit protein uS4 from Wolbachia sp. subsp. Brugia malayi (strain TRS).